Here is a 446-residue protein sequence, read N- to C-terminus: MHSRPLPTLGRHAARSVLNSPNFFIGNRAYPLKSSVGAKAILYTAGILGGAFAGYYLFNARSAIHEYLLCPILRLATPDAENGHRAGIFCLKWGLAPKLLFDEDDEVLHVNVFGTKMTNPIGCAAGLDKDAEAIDGIMQGGFGYMEIGSVTPLPQPGNPKPRFFRLPQDDAVINRYGFNSSGHDAVYSNLSKRVTSFLKSYFAKDNEIDKLSLYKNKLLAINLGKNKTGDEVKDYLKGVEKFQSHADVLVINVSSPNTPGLRDLQNESKLTDLLSQIVQKRNSLIQNGNVLGAKTHKPPVLVKIAPDLTEPELESIAVAAKKSKVDGIIVSNTTIQRPDSLVTRDEALKSQTGGLSGKPLKPFALKALKTVYKYTKDSELVLVGCGGISSGQDAIEFAKAGATFVQLYTSYAYKGPGLIAHIKDEVTEELKKEGKTWNQIIGEDSK.

The transit peptide at 1-13 (MHSRPLPTLGRHA) directs the protein to the mitochondrion. A helical membrane pass occupies residues 40–57 (AILYTAGILGGAFAGYYL). FMN-binding positions include 125 to 129 (AGLDK) and Ser149. Residue Lys129 coordinates substrate. 174-178 (NRYGF) lines the substrate pocket. Positions 222 and 252 each coordinate FMN. Residues Asn252 and 252 to 257 (NVSSPN) each bind substrate. The Nucleophile role is filled by Ser255. FMN is bound by residues Lys303 and Ser331. Residue 332–333 (NT) coordinates substrate. FMN is bound by residues Gly357, Gly387, and 408–409 (YT).

This sequence belongs to the dihydroorotate dehydrogenase family. Type 2 subfamily. It depends on FMN as a cofactor.

Its subcellular location is the mitochondrion inner membrane. The enzyme catalyses (S)-dihydroorotate + a quinone = orotate + a quinol. Its pathway is pyrimidine metabolism; UMP biosynthesis via de novo pathway; orotate from (S)-dihydroorotate (quinone route): step 1/1. Its activity is regulated as follows. The activity is dependent of the presence of oxygen. Catalyzes the conversion of dihydroorotate to orotate with quinone as electron acceptor. The sequence is that of Dihydroorotate dehydrogenase (quinone), mitochondrial (URA9) from Lachancea kluyveri (strain ATCC 58438 / CBS 3082 / BCRC 21498 / NBRC 1685 / JCM 7257 / NCYC 543 / NRRL Y-12651) (Yeast).